Here is a 375-residue protein sequence, read N- to C-terminus: Cytochrome P450 monooxygenase ACRTS1 (375 aa).

Cys321 contacts heme.

The protein belongs to the cytochrome P450 family. The cofactor is heme.

It functions in the pathway mycotoxin biosynthesis. Functionally, cytochrome P450 monooxygenase; part of the gene cluster that mediates the biosynthesis of the host-selective toxins (HSTs) ACR-toxins responsible for brown spot of rough lemon disease by the rough lemon pathotype. ACR-toxins cause uncoupling of mitochondrial oxidative-phosphorylation similar to that of classic protonophore. The structure of the major form of ACR-toxin (ACR-toxin I) consists of an alpha-dihydropyrone ring in a 19-carbon polyalcohol, a typical polyketide structure. Minor toxins were characterized as having a pyrone ring with polyalcohol side chains different in length and showing weaker toxicity. The highly reducing polyketide synthase ACRTS2 has all necessary enzymatic domains for multiple cycles of condensation and beta-keto processing. The cytochrome P450 monooxygenase ACRTS1 has also been shown to be essential for ACR-toxin biosynthesis, however its exact role in the pathway has not been elucidated yet. This chain is Cytochrome P450 monooxygenase ACRTS1, found in Alternaria alternata (Alternaria rot fungus).